The following is a 99-amino-acid chain: MSITSLIGEVNHLDEYSGFLQNLYLSGGKRIAIVLAIRPGVSGWMRRTLHQLVYCTVGPVPLDSLICQFGPGECSKSSGTSLPCGFRTSPAGDSGGKIA.

This is an uncharacterized protein from Salmonella typhimurium (strain LT2 / SGSC1412 / ATCC 700720).